A 1253-amino-acid chain; its full sequence is Guanine nucleotide exchange factor SDC25 (1253 aa).

Positions 26 to 98 (QPIDVVECTY…PPSFTRSILN (73 aa)) constitute an SH3 domain. The disordered stretch occupies residues 624–649 (LNLDNAKDKKNGSQNTDIQEEEDEYE). The 133-residue stretch at 782–914 (GPIVRIKGGS…ELLKEVNQKF (133 aa)) folds into the N-terminal Ras-GEF domain. Positions 952–1199 (VDPVLFATQL…QYQLSLIIEP (248 aa)) constitute a Ras-GEF domain. Residues 1202–1253 (RKKVVPNSNSNNKSQEKSRDDQTDEGKTSTKKDRFPKFQLHKTKKKAPKVSK) are disordered. The segment covering 1215–1237 (SQEKSRDDQTDEGKTSTKKDRFP) has biased composition (basic and acidic residues). Over residues 1240-1253 (QLHKTKKKAPKVSK) the composition is skewed to basic residues.

Promotes the exchange of Ras-bound GDP by GTP. The protein is Guanine nucleotide exchange factor SDC25 (SDC25) of Saccharomyces cerevisiae (Baker's yeast).